The primary structure comprises 507 residues: MAEEQAYHVNKGLECIKALRARPLDPLVVEEALAAWVETSEGQTLDRMSSDEAEADHQDISKPCFPAAGPGKSSMSRCHDQGLRGSNSCDEELGAFIGDSSMHSTEVQHYHVYDHSGEKVEGVEDADSILVQSGADDGVEVWGGDEESENSDVDSGEPDPEGSAPADWGSSPISPATRASDVETVEGDEIQKLLEDQSRIRKMTKAGKTLVVPPIPSQERPTASEKPIKKGTDVKSTSSGTMAESSSTGGATRPALKSQWGPSGPNASAENALASASNVSPTQGSKTESGTTTSRISQSNIEPEDDYDDELFSDIQDIKTALAKLHDDQQIIITRLESLLSLKGEIDSIKKQISKQNISISTIEGHLSSFMIAIPGFGKDPNDPTADVDINPDLRPIIGRDSGRALAEVLKKPASERQSKDTGKLGIESKGLLKKEFQLKPIEKKSSSAIRFVPDGSVASRSVIRSIIKSSHLGEDRKDYLMSLLNDIQGSKDLAQFHQMLVKILKN.

Residues aspartate 56 to histidine 79 form a disordered region. Serine 86 and serine 151 each carry phosphoserine. Acidic residues predominate over residues aspartate 137–proline 160. The interval aspartate 137 to tyrosine 307 is disordered. Composition is skewed to basic and acidic residues over residues glutamate 189 to arginine 199 and threonine 222 to aspartate 233. Composition is skewed to low complexity over residues serine 236 to threonine 252 and asparagine 266 to asparagine 278. A compositionally biased stretch (polar residues) spans valine 279–isoleucine 301. Residues glutamate 304–glycine 376 form a multimerization region. Residues alanine 459–asparagine 507 form an interaction with the nucleocapsid (N-RNA) region.

The protein belongs to the morbillivirus P protein family. As to quaternary structure, homotetramer. Interacts (via multimerization domain) with polymerase L; this interaction forms the polymerase L-P complex. Interacts (via N-terminus) with N0 (via Ncore); this interaction allows P to chaperon N0 to avoid N polymerization before encapsidation. Interacts (via C-terminus) with N-RNA template; this interaction positions the polymerase on the template for both transcription and replication. Phosphorylation on serines by host CK2 is necessary for the formation of viral factories.

Its function is as follows. Essential cofactor of the RNA polymerase L that plays a central role in the transcription and replication by forming the polymerase complex with RNA polymerase L and recruiting L to the genomic N-RNA template for RNA synthesis. Also plays a central role in the encapsidation of nascent RNA chains by forming the encapsidation complex with the nucleocapsid protein N (N-P complex). Acts as a chaperone for newly synthesized free N protein, so-called N0, allowing encapsidation of nascent RNA chains during replication. The nucleoprotein protein N prevents excessive phosphorylation of P, which leads to down-regulation of viral transcription/ replication. Participates, together with N, in the formation of viral factories (viroplasms), which are large inclusions in the host cytoplasm where replication takes place. The sequence is that of Phosphoprotein (P/V) from Bos indicus (Zebu).